A 255-amino-acid chain; its full sequence is MAVGNINELPENILLELFTHVPARQLLLNCRLVCSLWRDLIDLVTLWKRKCLREGFITEDWDQPVADWKIFYFLRSLHRNLLHNPCAEEGFEFWSLDVNGGDEWKVEDLSRDQRKEFPNDQVKKYFVTSYYTCLKSQVVDLKAEGYWEELMDTTRPDIEVKDWFAARPDCGSKYQLCVQLLSSAHAPLGTFQPDPATIQQKSDAKWREVSHTFSNYPPGVRYIWFQHGGVDTHYWAGWYGPRVTNSSITIGPPLP.

The 48-residue stretch at 3-50 (VGNINELPENILLELFTHVPARQLLLNCRLVCSLWRDLIDLVTLWKRK) folds into the F-box domain. Residues 71-252 (FYFLRSLHRN…VTNSSITIGP (182 aa)) enclose the FBA domain.

Part of a SCF (SKP1-cullin-F-box) protein ligase complex. Interacts with SKP1 and CUL1. Abundantly expressed in brain and kidney. Expressed at lower levels in heart, spleen and liver.

Functionally, substrate-recognition component of the SCF (SKP1-CUL1-F-box protein)-type E3 ubiquitin ligase complex. The polypeptide is F-box only protein 44 (FBXO44) (Homo sapiens (Human)).